Here is a 254-residue protein sequence, read N- to C-terminus: 5-oxoprolinase subunit A (254 aa).

Belongs to the LamB/PxpA family. In terms of assembly, forms a complex composed of PxpA, PxpB and PxpC.

It carries out the reaction 5-oxo-L-proline + ATP + 2 H2O = L-glutamate + ADP + phosphate + H(+). Its function is as follows. Catalyzes the cleavage of 5-oxoproline to form L-glutamate coupled to the hydrolysis of ATP to ADP and inorganic phosphate. In Brevibacillus brevis (strain 47 / JCM 6285 / NBRC 100599), this protein is 5-oxoprolinase subunit A.